Reading from the N-terminus, the 469-residue chain is Sulfate adenylyltransferase subunit 1 (469 aa).

Residues 22–238 (KQLLRFITCG…LETIKIDEDR (217 aa)) enclose the tr-type G domain. The interval 31–38 (GSVDDGKS) is G1. 31-38 (GSVDDGKS) is a binding site for GTP. The G2 stretch occupies residues 89–93 (GITID). Residues 110–113 (DTPG) form a G3 region. GTP is bound by residues 110–114 (DTPGH) and 165–168 (NKMD). Residues 165-168 (NKMD) are G4. The tract at residues 203–205 (SAL) is G5.

This sequence belongs to the TRAFAC class translation factor GTPase superfamily. Classic translation factor GTPase family. CysN/NodQ subfamily. In terms of assembly, heterodimer composed of CysD, the smaller subunit, and CysN.

It carries out the reaction sulfate + ATP + H(+) = adenosine 5'-phosphosulfate + diphosphate. Its pathway is sulfur metabolism; hydrogen sulfide biosynthesis; sulfite from sulfate: step 1/3. Its function is as follows. With CysD forms the ATP sulfurylase (ATPS) that catalyzes the adenylation of sulfate producing adenosine 5'-phosphosulfate (APS) and diphosphate, the first enzymatic step in sulfur assimilation pathway. APS synthesis involves the formation of a high-energy phosphoric-sulfuric acid anhydride bond driven by GTP hydrolysis by CysN coupled to ATP hydrolysis by CysD. In Aliarcobacter butzleri (strain RM4018) (Arcobacter butzleri), this protein is Sulfate adenylyltransferase subunit 1.